The sequence spans 154 residues: Myoglobin (154 aa).

The region spanning 2–148 (GLSDGEWQLV…FRNDMAAKYK (147 aa)) is the Globin domain. The residue at position 4 (Ser4) is a Phosphoserine. His65 provides a ligand contact to nitrite. His65 contributes to the O2 binding site. Residue Thr68 is modified to Phosphothreonine. Residue His94 coordinates heme b.

The protein belongs to the globin family. Monomeric.

It localises to the cytoplasm. Its subcellular location is the sarcoplasm. The enzyme catalyses Fe(III)-heme b-[protein] + nitric oxide + H2O = Fe(II)-heme b-[protein] + nitrite + 2 H(+). The catalysed reaction is H2O2 + AH2 = A + 2 H2O. Its function is as follows. Monomeric heme protein which primary function is to store oxygen and facilitate its diffusion within muscle tissues. Reversibly binds oxygen through a pentacoordinated heme iron and enables its timely and efficient release as needed during periods of heightened demand. Depending on the oxidative conditions of tissues and cells, and in addition to its ability to bind oxygen, it also has a nitrite reductase activity whereby it regulates the production of bioactive nitric oxide. Under stress conditions, like hypoxia and anoxia, it also protects cells against reactive oxygen species thanks to its pseudoperoxidase activity. This Lagothrix lagotricha (Brown woolly monkey) protein is Myoglobin (MB).